Here is a 104-residue protein sequence, read N- to C-terminus: uncharacterized protein (104 aa).

Helical transmembrane passes span 47–67 (IDHR…LAML) and 72–92 (VGHV…FVLA).

It to M.leprae ML1584.

It is found in the cell membrane. This is an uncharacterized protein from Mycobacterium tuberculosis (strain CDC 1551 / Oshkosh).